Consider the following 367-residue polypeptide: tRNA 2-selenouridine synthase (367 aa).

The region spanning 12–135 is the Rhodanese domain; it reads FLSGVAMLDV…MRGFLIETTD (124 aa). Cys-95 (S-selanylcysteine intermediate) is an active-site residue.

It belongs to the SelU family. In terms of assembly, monomer.

It carries out the reaction 5-methylaminomethyl-2-thiouridine(34) in tRNA + selenophosphate + (2E)-geranyl diphosphate + H2O + H(+) = 5-methylaminomethyl-2-selenouridine(34) in tRNA + (2E)-thiogeraniol + phosphate + diphosphate. The enzyme catalyses 5-methylaminomethyl-2-thiouridine(34) in tRNA + (2E)-geranyl diphosphate = 5-methylaminomethyl-S-(2E)-geranyl-thiouridine(34) in tRNA + diphosphate. It catalyses the reaction 5-methylaminomethyl-S-(2E)-geranyl-thiouridine(34) in tRNA + selenophosphate + H(+) = 5-methylaminomethyl-2-(Se-phospho)selenouridine(34) in tRNA + (2E)-thiogeraniol. The catalysed reaction is 5-methylaminomethyl-2-(Se-phospho)selenouridine(34) in tRNA + H2O = 5-methylaminomethyl-2-selenouridine(34) in tRNA + phosphate. Its function is as follows. Involved in the post-transcriptional modification of the uridine at the wobble position (U34) of tRNA(Lys), tRNA(Glu) and tRNA(Gln). Catalyzes the conversion of 2-thiouridine (S2U-RNA) to 2-selenouridine (Se2U-RNA). Acts in a two-step process involving geranylation of 2-thiouridine (S2U) to S-geranyl-2-thiouridine (geS2U) and subsequent selenation of the latter derivative to 2-selenouridine (Se2U) in the tRNA chain. The chain is tRNA 2-selenouridine synthase from Cupriavidus necator (strain ATCC 17699 / DSM 428 / KCTC 22496 / NCIMB 10442 / H16 / Stanier 337) (Ralstonia eutropha).